Reading from the N-terminus, the 235-residue chain is Phosphoribosylaminoimidazole-succinocarboxamide synthase (235 aa).

This sequence belongs to the SAICAR synthetase family.

It catalyses the reaction 5-amino-1-(5-phospho-D-ribosyl)imidazole-4-carboxylate + L-aspartate + ATP = (2S)-2-[5-amino-1-(5-phospho-beta-D-ribosyl)imidazole-4-carboxamido]succinate + ADP + phosphate + 2 H(+). The protein operates within purine metabolism; IMP biosynthesis via de novo pathway; 5-amino-1-(5-phospho-D-ribosyl)imidazole-4-carboxamide from 5-amino-1-(5-phospho-D-ribosyl)imidazole-4-carboxylate: step 1/2. In Chlorobaculum parvum (strain DSM 263 / NCIMB 8327) (Chlorobium vibrioforme subsp. thiosulfatophilum), this protein is Phosphoribosylaminoimidazole-succinocarboxamide synthase.